Consider the following 324-residue polypeptide: Acetyl-coenzyme A carboxylase carboxyl transferase subunit beta (324 aa).

Residues 1–16 (MTKNNNDLSNSSSNPP) show a composition bias toward low complexity. The disordered stretch occupies residues 1-51 (MTKNNNDLSNSSSNPPSNRPVAGKEAELEIQRETHAAQSGQSESWLSRPIP). A compositionally biased stretch (basic and acidic residues) spans 22–35 (AGKEAELEIQRETH). A compositionally biased stretch (polar residues) spans 36–45 (AAQSGQSESW). One can recognise a CoA carboxyltransferase N-terminal domain in the interval 68 to 324 (PSTECPQCHS…YRLLAKLTHV (257 aa)). Residues cysteine 72, cysteine 75, cysteine 91, and cysteine 94 each contribute to the Zn(2+) site. The segment at 72–94 (CPQCHSMITNTALIFNAYVCPHC) adopts a C4-type zinc-finger fold.

The protein belongs to the AccD/PCCB family. As to quaternary structure, acetyl-CoA carboxylase is a heterohexamer composed of biotin carboxyl carrier protein (AccB), biotin carboxylase (AccC) and two subunits each of ACCase subunit alpha (AccA) and ACCase subunit beta (AccD). Zn(2+) serves as cofactor.

It localises to the cytoplasm. The catalysed reaction is N(6)-carboxybiotinyl-L-lysyl-[protein] + acetyl-CoA = N(6)-biotinyl-L-lysyl-[protein] + malonyl-CoA. Its pathway is lipid metabolism; malonyl-CoA biosynthesis; malonyl-CoA from acetyl-CoA: step 1/1. Component of the acetyl coenzyme A carboxylase (ACC) complex. Biotin carboxylase (BC) catalyzes the carboxylation of biotin on its carrier protein (BCCP) and then the CO(2) group is transferred by the transcarboxylase to acetyl-CoA to form malonyl-CoA. This chain is Acetyl-coenzyme A carboxylase carboxyl transferase subunit beta, found in Psychrobacter sp. (strain PRwf-1).